Here is a 369-residue protein sequence, read N- to C-terminus: Probable L-tyrosine/L-aspartate decarboxylase (369 aa).

An N6-(pyridoxal phosphate)lysine modification is found at Lys-224.

The protein belongs to the group II decarboxylase family. MfnA subfamily. It depends on pyridoxal 5'-phosphate as a cofactor.

The catalysed reaction is L-tyrosine + H(+) = tyramine + CO2. The enzyme catalyses L-aspartate + H(+) = beta-alanine + CO2. It participates in cofactor biosynthesis; methanofuran biosynthesis. The protein operates within cofactor biosynthesis; coenzyme A biosynthesis. Catalyzes the decarboxylation of L-tyrosine to produce tyramine for methanofuran biosynthesis. Can also catalyze the decarboxylation of L-aspartate to produce beta-alanine for coenzyme A (CoA) biosynthesis. This Methanospirillum hungatei JF-1 (strain ATCC 27890 / DSM 864 / NBRC 100397 / JF-1) protein is Probable L-tyrosine/L-aspartate decarboxylase.